The chain runs to 1657 residues: Alsin (1657 aa).

3 RCC1 repeats span residues 59 to 108, 109 to 167, and 169 to 218; these read DGEV…AVTD, NGVA…ALSI, and REIW…ALVQ. The disordered stretch occupies residues 432–480; that stretch reads TGAQAGSSAIGPEGLKDSREEQVKQESMQGKKSSSLVDIREEETEGGSR. Residues 445–455 are compositionally biased toward basic and acidic residues; it reads GLKDSREEQVK. A compositionally biased stretch (polar residues) spans 456 to 467; the sequence is QESMQGKKSSSL. 4 positions are modified to phosphoserine: serine 465, serine 466, serine 483, and serine 492. Threonine 510 carries the phosphothreonine modification. RCC1 repeat units follow at residues 525 to 576 and 578 to 627; these read RTEV…ALTA and SQVY…FLVD. Lysine 533 carries the N6-acetyllysine modification. The 196-residue stretch at 690-885 folds into the DH domain; it reads GYIASLHELA…ECLALHLGRK (196 aa). Positions 901-1007 constitute a PH domain; sequence GKMTDSLRKP…RAISQAVDQA (107 aa). MORN repeat units lie at residues 1049–1071, 1072–1094, 1100–1122, 1123–1145, 1151–1173, 1175–1197, 1198–1220, and 1221–1244; these read YDGRWLSGKPHGRGVLKWPDGKM, YSGMFRNGLEDGYGEYRIPNKAM, YVGHWKEGKMCGQGVYSYASGEV, FEGCFQDNMRHGHGLLRSGKLTS, FIGQWVMDKKAGYGVFDDITRGE, YMGMWQDDVCQGNGVVVTQFGLY, YEGNFHLNKMMGNGVLLSEDDTI, and YEGEFSDDWTLSGKGTLTMPNGDY. At serine 1335 the chain carries Phosphoserine. The VPS9 domain occupies 1513 to 1657; that stretch reads KQPDIALLGF…YYQIQREKLN (145 aa).

Forms a heteromeric complex with ALS2CL. Interacts with ALS2CL.

Its function is as follows. May act as a GTPase regulator. Controls survival and growth of spinal motoneurons. The polypeptide is Alsin (ALS2) (Homo sapiens (Human)).